The following is a 200-amino-acid chain: Imidazoleglycerol-phosphate dehydratase (200 aa).

It belongs to the imidazoleglycerol-phosphate dehydratase family.

It localises to the cytoplasm. It catalyses the reaction D-erythro-1-(imidazol-4-yl)glycerol 3-phosphate = 3-(imidazol-4-yl)-2-oxopropyl phosphate + H2O. The protein operates within amino-acid biosynthesis; L-histidine biosynthesis; L-histidine from 5-phospho-alpha-D-ribose 1-diphosphate: step 6/9. The polypeptide is Imidazoleglycerol-phosphate dehydratase (Bifidobacterium animalis subsp. lactis (strain AD011)).